Here is a 286-residue protein sequence, read N- to C-terminus: 33 kDa chaperonin (286 aa).

Intrachain disulfides connect Cys-236-Cys-238 and Cys-264-Cys-267.

It belongs to the HSP33 family. In terms of processing, under oxidizing conditions two disulfide bonds are formed involving the reactive cysteines. Under reducing conditions zinc is bound to the reactive cysteines and the protein is inactive.

It localises to the cytoplasm. Redox regulated molecular chaperone. Protects both thermally unfolding and oxidatively damaged proteins from irreversible aggregation. Plays an important role in the bacterial defense system toward oxidative stress. This is 33 kDa chaperonin from Carboxydothermus hydrogenoformans (strain ATCC BAA-161 / DSM 6008 / Z-2901).